The chain runs to 309 residues: Protein FdhE homolog (309 aa).

The protein belongs to the FdhE family.

The protein resides in the cytoplasm. Necessary for formate dehydrogenase activity. The polypeptide is Protein FdhE homolog (Enterobacter sp. (strain 638)).